A 300-amino-acid polypeptide reads, in one-letter code: DDRGK domain-containing protein 1 (300 aa).

At 1–2 (MD) the chain is on the lumenal side. Residues 3–23 (VVLYIAAAAILLVLIVFSVKI) form a helical membrane-spanning segment. Topologically, residues 24-300 (RGRTQDADVE…NLTPDIHSSA (277 aa)) are cytoplasmic. The disordered stretch occupies residues 28-173 (QDADVEDHQN…RVKEEQERRE (146 aa)). The span at 78–90 (NEDSPVEADEDEE) shows a compositional bias: acidic residues. A compositionally biased stretch (basic and acidic residues) spans 112-173 (KLEEKQARKA…RVKEEQERRE (62 aa)). Residues 183–197 (SFIIEDQGEAEELTE) carry the UFM1-interacting motif (UFIM) motif. A PCI domain is found at 217–261 (VLLEDLASQFGLRTQDAIARLQDLIADGSLTGVIDDRGKFIFITP).

This sequence belongs to the DDRGK1 family. In terms of assembly, component of the UFM1 ribosome E3 ligase (UREL) complex, composed of ufl1, ddrgk1 and cdk5rap3.

The protein resides in the endoplasmic reticulum membrane. Functionally, component of the UFM1 ribosome E3 ligase (UREL) complex, a multiprotein complex that catalyzes ufmylation of endoplasmic reticulum-docked proteins. The UREL complex plays a key role in ribosome recycling by mediating mono-ufmylation of the RPL26/uL24 subunit of the 60S ribosome following ribosome dissociation: ufmylation weakens the junction between post-termination 60S subunits and SEC61 translocons, promoting release and recycling of the large ribosomal subunit from the endoplasmic reticulum membrane. Ufmylation of RPL26/uL24 and subsequent 60S ribosome recycling either take place after normal termination of translation or after ribosome stalling during cotranslational translocation at the endoplasmic reticulum. Within the UREL complex, DDRGK1 tethers the complex to the endoplasmic reticulum membrane to restrict its activity to endoplasmic reticulum-docked ribosomes and acts as an ufmylation 'reader': following RPL26/uL24 ufmylation, DDRGK1 specifically binds to ufmylated RPL26/uL24 via its UFIM motif, resulting in stable association between the 60S ribosome and the UREL complex, followed by dissociation of the 60S ribosome subunit from the endoplasmic reticulum membrane. The UREL complex is also involved in reticulophagy in response to endoplasmic reticulum stress by promoting ufmylation of proteins such as CYB5R3 and RPN1, thereby promoting lysosomal degradation of ufmylated proteins. Plays a role in cartilage development through sox9, inhibiting the ubiquitin-mediated proteasomal degradation of this transcriptional regulator. Required for stabilization and ufmylation of ATG9A. This is DDRGK domain-containing protein 1 from Danio rerio (Zebrafish).